The primary structure comprises 259 residues: uncharacterized protein (259 aa).

This is an uncharacterized protein from Bacillus anthracis.